The primary structure comprises 128 residues: MSKEKTPRALKDNEAKAVARMLRISPQKLNLLAQLIRGKKVERALAELEFSRKRAAFDVRKTLESAIANAENNHSLEVDDLVVAEAFVGKALVMKRFSPRARGRSGKIQKPFSHLTIVLREVAVAAQA.

The protein belongs to the universal ribosomal protein uL22 family. Part of the 50S ribosomal subunit.

In terms of biological role, this protein binds specifically to 23S rRNA; its binding is stimulated by other ribosomal proteins, e.g. L4, L17, and L20. It is important during the early stages of 50S assembly. It makes multiple contacts with different domains of the 23S rRNA in the assembled 50S subunit and ribosome. The globular domain of the protein is located near the polypeptide exit tunnel on the outside of the subunit, while an extended beta-hairpin is found that lines the wall of the exit tunnel in the center of the 70S ribosome. This Methylocella silvestris (strain DSM 15510 / CIP 108128 / LMG 27833 / NCIMB 13906 / BL2) protein is Large ribosomal subunit protein uL22.